Consider the following 398-residue polypeptide: Acetate kinase (398 aa).

Asn-7 lines the Mg(2+) pocket. Position 14 (Lys-14) interacts with ATP. Position 91 (Arg-91) interacts with substrate. The active-site Proton donor/acceptor is the Asp-148. Residues 208-212 (HIGNG), 283-285 (DLR), and 331-335 (GVGEN) contribute to the ATP site. Glu-385 lines the Mg(2+) pocket.

It belongs to the acetokinase family. In terms of assembly, homodimer. Requires Mg(2+) as cofactor. Mn(2+) is required as a cofactor.

The protein localises to the cytoplasm. It catalyses the reaction acetate + ATP = acetyl phosphate + ADP. The protein operates within metabolic intermediate biosynthesis; acetyl-CoA biosynthesis; acetyl-CoA from acetate: step 1/2. Its function is as follows. Catalyzes the formation of acetyl phosphate from acetate and ATP. Can also catalyze the reverse reaction. This is Acetate kinase from Porphyromonas gingivalis (strain ATCC 33277 / DSM 20709 / CIP 103683 / JCM 12257 / NCTC 11834 / 2561).